A 291-amino-acid polypeptide reads, in one-letter code: MKIAVYGKGGIGKSTTSCNISVALARRGQKVLQIGCDPKHDSTFTLTGFLIPTIIDTLQSKDYHYEDIWPEDVIHKGYGGVDCVEAGGPPAGAGCGGYVVGETVKLLKELNAFYEYDIILFDVLGDVVCGGFAAPLNYADYCVIITDNGFDALFAANRITASIREKARTHPLRLAGLVGNRTSKRDLIHKYVEACPMPVIEVLPIIEDIRVSRVKGKTLFEMVGSEPSLNYVCKYYLDIADQILSQPEGIVPKEIPDRELFSLLSDLYLNPIGGGGQKKKNQENLLGFTRI.

ATP contacts are provided by residues 10–15 (GIGKST) and Lys-39. Ser-14 is a Mg(2+) binding site. [4Fe-4S] cluster is bound by residues Cys-95 and Cys-129. 180–181 (NR) serves as a coordination point for ATP.

This sequence belongs to the NifH/BchL/ChlL family. Homodimer. Protochlorophyllide reductase is composed of three subunits; ChlL, ChlN and ChlB. It depends on [4Fe-4S] cluster as a cofactor.

The protein resides in the plastid. It is found in the chloroplast. The catalysed reaction is chlorophyllide a + oxidized 2[4Fe-4S]-[ferredoxin] + 2 ADP + 2 phosphate = protochlorophyllide a + reduced 2[4Fe-4S]-[ferredoxin] + 2 ATP + 2 H2O. Its pathway is porphyrin-containing compound metabolism; chlorophyll biosynthesis (light-independent). Its function is as follows. Component of the dark-operative protochlorophyllide reductase (DPOR) that uses Mg-ATP and reduced ferredoxin to reduce ring D of protochlorophyllide (Pchlide) to form chlorophyllide a (Chlide). This reaction is light-independent. The L component serves as a unique electron donor to the NB-component of the complex, and binds Mg-ATP. The sequence is that of Light-independent protochlorophyllide reductase iron-sulfur ATP-binding protein from Larix decidua (European larch).